The chain runs to 375 residues: MAKTKQQKSKPKKQPHQKQGKDCDLSQFRAQLDALGLKIIQVTADGNCFFRAIADQLEGNEDEHNKYRNMIVLYIVKNREMFEPFIEDDVPFEDYCKTMDDDGTWAGNMELQAASLVTRSNICIHRNMSPRWYIRNFEDTRTRMIHLSYHDGEHYNSVRSKEDACGGPARPVVIEADAKVSAASKQAKATESKSKNKADKCHVNAGAIKVVMSGSCCDNTEKAEQVLLQVNGDVDAAIEFLIADQGMESLTENDTETASASDTINPKHASDSPMENTEQAREELIEEESASGNNSETVQAKCTTQTDDKKIPRNKTCPCGSKKKYKSCCGTATGRSSVKLLVSQTMESKKGRKNLRRGTSNEVEANAPDVGALCI.

The span at 1–18 shows a compositional bias: basic residues; it reads MAKTKQQKSKPKKQPHQK. A disordered region spans residues 1-23; that stretch reads MAKTKQQKSKPKKQPHQKQGKDC. Positions 37–161 constitute an OTU domain; sequence LKIIQVTADG…GEHYNSVRSK (125 aa). Residue Asp45 is part of the active site. The Nucleophile role is filled by Cys48. His154 is a catalytic residue. Residues 202–250 enclose the UBA-like domain; it reads HVNAGAIKVVMSGSCCDNTEKAEQVLLQVNGDVDAAIEFLIADQGMESL. Composition is skewed to polar residues over residues 251 to 264 and 290 to 305; these read TEND…SDTI and ASGN…CTTQ. Residues 251-306 form a disordered region; it reads TENDTETASASDTINPKHASDSPMENTEQAREELIEEESASGNNSETVQAKCTTQT. The Nuclear localization signal signature appears at 308–315; sequence DKKIPRNK.

Belongs to the peptidase C85 family.

It localises to the nucleus. It carries out the reaction Thiol-dependent hydrolysis of ester, thioester, amide, peptide and isopeptide bonds formed by the C-terminal Gly of ubiquitin (a 76-residue protein attached to proteins as an intracellular targeting signal).. Hydrolase that can remove conjugated ubiquitin from proteins in vitro and may therefore play an important regulatory role at the level of protein turnover by preventing degradation. Cysteine protease with a preference for 'Lys-63' over 'Lys-48' over 'Met-1' -linked ubiquitin (UB) tetramers as substrates. Also cleaves RUB-GST fusion. The protein is OVARIAN TUMOR DOMAIN-containing deubiquitinating enzyme 7 of Arabidopsis thaliana (Mouse-ear cress).